The sequence spans 88 residues: Small ribosomal subunit protein bS20 (88 aa).

Belongs to the bacterial ribosomal protein bS20 family.

Binds directly to 16S ribosomal RNA. The protein is Small ribosomal subunit protein bS20 of Bradyrhizobium diazoefficiens (strain JCM 10833 / BCRC 13528 / IAM 13628 / NBRC 14792 / USDA 110).